The chain runs to 443 residues: Thymidine phosphorylase (443 aa).

The protein belongs to the thymidine/pyrimidine-nucleoside phosphorylase family. Homodimer.

It catalyses the reaction thymidine + phosphate = 2-deoxy-alpha-D-ribose 1-phosphate + thymine. It participates in pyrimidine metabolism; dTMP biosynthesis via salvage pathway; dTMP from thymine: step 1/2. Its function is as follows. The enzymes which catalyze the reversible phosphorolysis of pyrimidine nucleosides are involved in the degradation of these compounds and in their utilization as carbon and energy sources, or in the rescue of pyrimidine bases for nucleotide synthesis. This chain is Thymidine phosphorylase, found in Shewanella baltica (strain OS195).